Consider the following 85-residue polypeptide: Beta-insect depressant toxin Lqh-dprIT3h (85 aa).

An N-terminal signal peptide occupies residues 1-21 (MKLLLLLTISASMLIEGLVNA). Positions 22–82 (DGYIRGGDGC…EWDYETDTCG (61 aa)) constitute an LCN-type CS-alpha/beta domain. 4 disulfide bridges follow: cysteine 31/cysteine 81, cysteine 35/cysteine 56, cysteine 42/cysteine 63, and cysteine 46/cysteine 65. A Glycine amide modification is found at glycine 82.

This sequence belongs to the long (4 C-C) scorpion toxin superfamily. Sodium channel inhibitor family. Beta subfamily. Expressed by the venom gland.

The protein resides in the secreted. In terms of biological role, depressant insect beta-toxins cause a transient contraction paralysis followed by a slow flaccid paralysis. They bind voltage-independently at site-4 of sodium channels (Nav) and block action potentials, primarily by depolarizing the axonal membrane and suppressing the sodium current. This depressant toxin is active only on insects. It is found in a relatively small amount in the venom. The chain is Beta-insect depressant toxin Lqh-dprIT3h from Leiurus hebraeus (Hebrew deathstalker scorpion).